A 434-amino-acid chain; its full sequence is Serine--tRNA ligase (434 aa).

241 to 243 (TAE) is an L-serine binding site. ATP is bound at residue 272-274 (RSE). L-serine is bound at residue glutamate 295. Position 359-362 (359-362 (EISS)) interacts with ATP. Serine 395 contacts L-serine.

It belongs to the class-II aminoacyl-tRNA synthetase family. Type-1 seryl-tRNA synthetase subfamily. Homodimer. The tRNA molecule binds across the dimer.

It localises to the cytoplasm. It catalyses the reaction tRNA(Ser) + L-serine + ATP = L-seryl-tRNA(Ser) + AMP + diphosphate + H(+). The catalysed reaction is tRNA(Sec) + L-serine + ATP = L-seryl-tRNA(Sec) + AMP + diphosphate + H(+). The protein operates within aminoacyl-tRNA biosynthesis; selenocysteinyl-tRNA(Sec) biosynthesis; L-seryl-tRNA(Sec) from L-serine and tRNA(Sec): step 1/1. Catalyzes the attachment of serine to tRNA(Ser). Is also able to aminoacylate tRNA(Sec) with serine, to form the misacylated tRNA L-seryl-tRNA(Sec), which will be further converted into selenocysteinyl-tRNA(Sec). The sequence is that of Serine--tRNA ligase from Glaesserella parasuis serovar 5 (strain SH0165) (Haemophilus parasuis).